The primary structure comprises 213 residues: Transcriptional regulatory protein CrdR (213 aa).

Residues 4–119 (KIFLLEDDYL…ELEARIKRFF (116 aa)) form the Response regulatory domain. A 4-aspartylphosphate modification is found at aspartate 53. The ompR/PhoB-type DNA-binding region spans 121–212 (DDPIEIMPNI…HKGVGYRFNP (92 aa)).

In terms of processing, phosphorylated by CrdS.

Member of the two-component regulatory system CrdR/CrdS that induces the transcriptional induction of the copper resistance determinant CrdA. Upon phosphorylation by CrdS, functions as a transcriptional regulator by direct binding to promoter regions of target genes including the crdA promoter or nitric oxide-responsive gene promoters. This chain is Transcriptional regulatory protein CrdR, found in Helicobacter pylori (strain ATCC 700392 / 26695) (Campylobacter pylori).